The chain runs to 106 residues: MGCMKSKETFPFPTTLDIDKLHESEEAFIPDDSSQYRTPSPGEQQQVQEVKKLPEPGAVIGALILEFADRLASEIVEDALQQWACENIQYYNIPYIESEGSDTTIN.

G2 carries N-myristoyl glycine lipidation. C3 is lipidated: S-palmitoyl cysteine. The residue at position 40 (S40) is a Phosphoserine. A PKA-RI-binding region spans residues 62–85; that stretch reads ALILEFADRLASEIVEDALQQWAC. S98 bears the Phosphoserine mark.

Belongs to the small membrane AKAP family. In terms of assembly, interacts with PKA type I regulatory subunits PRKAR1A and PRKAR1B. Also binds to type II regulatory subunits, but at a tenfold lower affinity. In terms of processing, may be palmitoylated at Cys-3. Widely expressed, with very low levels in spleen and liver.

It is found in the cell membrane. Functionally, binds to type I regulatory subunits of protein kinase A (PKA-RI) and may anchor/target them to the plasma membrane. This Mus musculus (Mouse) protein is Small membrane A-kinase anchor protein.